A 114-amino-acid chain; its full sequence is T cell receptor beta variable 10-2 (114 aa).

The first 21 residues, 1 to 21, serve as a signal peptide directing secretion; that stretch reads MGTRLFFYVALCLLWAGHRDA. Residues 22-114 form the Ig-like domain; sequence GITQSPRYKI…TSVYFCASSE (93 aa). Cysteine 42 and cysteine 110 are oxidised to a cystine.

In terms of assembly, alpha-beta TR is a heterodimer composed of an alpha and beta chain; disulfide-linked. The alpha-beta TR is associated with the transmembrane signaling CD3 coreceptor proteins to form the TR-CD3 (TcR or TCR). The assembly of alpha-beta TR heterodimers with CD3 occurs in the endoplasmic reticulum where a single alpha-beta TR heterodimer associates with one CD3D-CD3E heterodimer, one CD3G-CD3E heterodimer and one CD247 homodimer forming a stable octameric structure. CD3D-CD3E and CD3G-CD3E heterodimers preferentially associate with TR alpha and TR beta chains, respectively. The association of the CD247 homodimer is the last step of TcR assembly in the endoplasmic reticulum and is required for transport to the cell surface.

It localises to the cell membrane. Functionally, v region of the variable domain of T cell receptor (TR) beta chain that participates in the antigen recognition. Alpha-beta T cell receptors are antigen specific receptors which are essential to the immune response and are present on the cell surface of T lymphocytes. Recognize peptide-major histocompatibility (MH) (pMH) complexes that are displayed by antigen presenting cells (APC), a prerequisite for efficient T cell adaptive immunity against pathogens. Binding of alpha-beta TR to pMH complex initiates TR-CD3 clustering on the cell surface and intracellular activation of LCK that phosphorylates the ITAM motifs of CD3G, CD3D, CD3E and CD247 enabling the recruitment of ZAP70. In turn ZAP70 phosphorylates LAT, which recruits numerous signaling molecules to form the LAT signalosome. The LAT signalosome propagates signal branching to three major signaling pathways, the calcium, the mitogen-activated protein kinase (MAPK) kinase and the nuclear factor NF-kappa-B (NF-kB) pathways, leading to the mobilization of transcription factors that are critical for gene expression and essential for T cell growth and differentiation. The T cell repertoire is generated in the thymus, by V-(D)-J rearrangement. This repertoire is then shaped by intrathymic selection events to generate a peripheral T cell pool of self-MH restricted, non-autoaggressive T cells. Post-thymic interaction of alpha-beta TR with the pMH complexes shapes TR structural and functional avidity. The protein is T cell receptor beta variable 10-2 of Homo sapiens (Human).